A 79-amino-acid chain; its full sequence is Sulfur carrier protein TusA (79 aa).

Cysteine 16 functions as the Cysteine persulfide intermediate in the catalytic mechanism.

This sequence belongs to the sulfur carrier protein TusA family.

The protein resides in the cytoplasm. Its function is as follows. Sulfur carrier protein which probably makes part of a sulfur-relay system. The polypeptide is Sulfur carrier protein TusA (Pseudomonas aeruginosa (strain LESB58)).